The chain runs to 126 residues: Protein ApaG (126 aa).

The region spanning 2 to 126 is the ApaG domain; the sequence is SQLTSSVRVD…FRLSIPGLLH (125 aa).

The polypeptide is Protein ApaG (Shewanella halifaxensis (strain HAW-EB4)).